The primary structure comprises 211 residues: Large ribosomal subunit protein uL3 (211 aa).

Glutamine 150 bears the N5-methylglutamine mark.

It belongs to the universal ribosomal protein uL3 family. Part of the 50S ribosomal subunit. Forms a cluster with proteins L14 and L19. Post-translationally, methylated by PrmB.

In terms of biological role, one of the primary rRNA binding proteins, it binds directly near the 3'-end of the 23S rRNA, where it nucleates assembly of the 50S subunit. In Pseudomonas aeruginosa (strain LESB58), this protein is Large ribosomal subunit protein uL3.